Consider the following 645-residue polypeptide: Heat shock protein SSA2 (645 aa).

S2 carries the post-translational modification N-acetylserine. The segment at 581–645 (ANQTATQEEF…NDGPTVEEVD (65 aa)) is disordered. Residues 611–621 (AGATPSGAAGA) show a composition bias toward low complexity.

The protein belongs to the heat shock protein 70 family. As to quaternary structure, binds human histatin-5, an antifungal peptide from saliva.

It localises to the cytoplasm. It is found in the secreted. Its subcellular location is the cell wall. Functionally, heat shock protein that may play a role in the transport of polypeptides both across the mitochondrial membranes and into the endoplasmic reticulum. Acts as a highly immunodominant antigen. Plays a role in the sensitivity to, and the import of candidacidal beta-defensin peptides. HSP70/SSA1 and SSA2 bind histatin-5, a peptide from human saliva, and mediates its fungicidal activity. SSA2 facilitates fungicidal activity of Hst 5 in binding and intracellular translocation, whereas HSP70/SSA1 appears to have a lesser functional role in Hst 5 toxicity. The polypeptide is Heat shock protein SSA2 (Candida albicans (strain SC5314 / ATCC MYA-2876) (Yeast)).